A 277-amino-acid polypeptide reads, in one-letter code: Phosphatidylglycerol--prolipoprotein diacylglyceryl transferase (277 aa).

The next 4 helical transmembrane spans lie at 18-38 (ISVK…LLLA), 51-71 (IIVD…RIYY), 89-109 (IWHG…TAII), and 116-136 (ISFW…QAIG). Arginine 137 lines the a 1,2-diacyl-sn-glycero-3-phospho-(1'-sn-glycerol) pocket. The next 3 helical transmembrane spans lie at 177 to 197 (QPTF…LLII), 205 to 225 (GELF…IEGM), and 235 to 255 (FRVS…IIIY).

Belongs to the Lgt family.

The protein resides in the cell membrane. The catalysed reaction is L-cysteinyl-[prolipoprotein] + a 1,2-diacyl-sn-glycero-3-phospho-(1'-sn-glycerol) = an S-1,2-diacyl-sn-glyceryl-L-cysteinyl-[prolipoprotein] + sn-glycerol 1-phosphate + H(+). Its pathway is protein modification; lipoprotein biosynthesis (diacylglyceryl transfer). Its function is as follows. Catalyzes the transfer of the diacylglyceryl group from phosphatidylglycerol to the sulfhydryl group of the N-terminal cysteine of a prolipoprotein, the first step in the formation of mature lipoproteins. The protein is Phosphatidylglycerol--prolipoprotein diacylglyceryl transferase of Listeria monocytogenes serovar 1/2a (strain ATCC BAA-679 / EGD-e).